The following is a 214-amino-acid chain: Charged multivesicular body protein 2b (214 aa).

Residues Q25–K55 adopt a coiled-coil conformation. The interval A179 to D201 is disordered. A compositionally biased stretch (polar residues) spans S190–I199. Residues E202 to G212 carry the MIT-interacting motif motif.

This sequence belongs to the SNF7 family. As to quaternary structure, probable core component of the endosomal sorting required for transport complex III (ESCRT-III). ESCRT-III components are thought to multimerize to form a flat lattice on the perimeter membrane of the endosome.

The protein localises to the cytoplasm. The protein resides in the cytosol. It is found in the late endosome membrane. Its function is as follows. Probable core component of the endosomal sorting required for transport complex III (ESCRT-III) which is involved in multivesicular bodies (MVBs) formation and sorting of endosomal cargo proteins into MVBs. MVBs contain intraluminal vesicles (ILVs) that are generated by invagination and scission from the limiting membrane of the endosome and mostly are delivered to lysosomes enabling degradation of membrane proteins, such as stimulated growth factor receptors, lysosomal enzymes and lipids. The sequence is that of Charged multivesicular body protein 2b (CHMP2B) from Gallus gallus (Chicken).